A 191-amino-acid chain; its full sequence is Small ribosomal subunit protein uS7 (191 aa).

This sequence belongs to the universal ribosomal protein uS7 family. As to quaternary structure, part of the 30S ribosomal subunit.

Its function is as follows. One of the primary rRNA binding proteins, it binds directly to 16S rRNA where it nucleates assembly of the head domain of the 30S subunit. Is located at the subunit interface close to the decoding center. This chain is Small ribosomal subunit protein uS7, found in Methanocaldococcus jannaschii (strain ATCC 43067 / DSM 2661 / JAL-1 / JCM 10045 / NBRC 100440) (Methanococcus jannaschii).